The sequence spans 515 residues: 2-isopropylmalate synthase (515 aa).

In terms of domain architecture, Pyruvate carboxyltransferase spans 4–266 (IKFFDTTLRD…ETRLNLQEIK (263 aa)). Mn(2+) is bound by residues Asp-13, His-201, His-203, and Asn-237. Residues 391-515 (QLSSIQVQYG…RGENEKVATP (125 aa)) form a regulatory domain region.

This sequence belongs to the alpha-IPM synthase/homocitrate synthase family. LeuA type 1 subfamily. As to quaternary structure, homodimer. The cofactor is Mn(2+).

The protein resides in the cytoplasm. It catalyses the reaction 3-methyl-2-oxobutanoate + acetyl-CoA + H2O = (2S)-2-isopropylmalate + CoA + H(+). The protein operates within amino-acid biosynthesis; L-leucine biosynthesis; L-leucine from 3-methyl-2-oxobutanoate: step 1/4. Functionally, catalyzes the condensation of the acetyl group of acetyl-CoA with 3-methyl-2-oxobutanoate (2-ketoisovalerate) to form 3-carboxy-3-hydroxy-4-methylpentanoate (2-isopropylmalate). This chain is 2-isopropylmalate synthase, found in Geobacillus kaustophilus (strain HTA426).